The sequence spans 234 residues: uncharacterized protein (234 aa).

Residues 62–99 (NEESISDLNSDNPGNSEPSDVESFVLSDEDENSEKDFS) are disordered. The segment covering 67–79 (SDLNSDNPGNSEP) has biased composition (polar residues).

This is an uncharacterized protein from Acanthamoeba polyphaga (Amoeba).